A 222-amino-acid polypeptide reads, in one-letter code: UPF0316 protein Mboo_0791 (222 aa).

3 helical membrane passes run 25-45, 67-87, and 93-113; these read FFLF…IFLA, LAPV…VGVL, and IAYF…GLVI.

It belongs to the UPF0316 family.

Its subcellular location is the cell membrane. The polypeptide is UPF0316 protein Mboo_0791 (Methanoregula boonei (strain DSM 21154 / JCM 14090 / 6A8)).